Here is a 286-residue protein sequence, read N- to C-terminus: Undecaprenyl-diphosphatase (286 aa).

A run of 7 helical transmembrane segments spans residues 43-63, 91-111, 118-138, 150-170, 189-209, 236-256, and 264-284; these read FWKM…PIYF, LTII…KIIG, IIMG…DVMF, MSVG…VFPG, AAAL…ATCY, ITLA…VAWF, and GFVP…AWAL.

It belongs to the UppP family.

It localises to the cell inner membrane. It catalyses the reaction di-trans,octa-cis-undecaprenyl diphosphate + H2O = di-trans,octa-cis-undecaprenyl phosphate + phosphate + H(+). Catalyzes the dephosphorylation of undecaprenyl diphosphate (UPP). Confers resistance to bacitracin. The chain is Undecaprenyl-diphosphatase from Koribacter versatilis (strain Ellin345).